The chain runs to 191 residues: Elongation factor P (191 aa).

Lysine 34 carries the post-translational modification N6-(3,6-diaminohexanoyl)-5-hydroxylysine.

This sequence belongs to the elongation factor P family. Post-translationally, may be beta-lysylated on the epsilon-amino group of Lys-34 by the combined action of EpmA and EpmB, and then hydroxylated on the C5 position of the same residue by EpmC (if this protein is present). Lysylation is critical for the stimulatory effect of EF-P on peptide-bond formation. The lysylation moiety may extend toward the peptidyltransferase center and stabilize the terminal 3-CCA end of the tRNA. Hydroxylation of the C5 position on Lys-34 may allow additional potential stabilizing hydrogen-bond interactions with the P-tRNA.

It localises to the cytoplasm. Its pathway is protein biosynthesis; polypeptide chain elongation. Involved in peptide bond synthesis. Alleviates ribosome stalling that occurs when 3 or more consecutive Pro residues or the sequence PPG is present in a protein, possibly by augmenting the peptidyl transferase activity of the ribosome. Modification of Lys-34 is required for alleviation. This is Elongation factor P from Marinomonas sp. (strain MWYL1).